We begin with the raw amino-acid sequence, 471 residues long: MAGATGIVTDIIGVVINAKFPEHETPEIYNALEIRLENGKRLVAEVQQQLGGGVVKAVAMSSTDGMRRGVKAIDTGRPIAVPVGPGTLGRVFDVLGDPIDGEGPVQTTEYRPIHRPPPALEDQSTTAQIFETGIKVIDLIAPFTRGGKTGIFGGAGVGKTVIIQELIANVAKEQSGYSVFAGVGERSREGNDLIHEMKEARIDEKTRVFDKTVMVFGQMNEPPGARLRVGLTAMTMAEYFRDEGRDVLLFIDNIFRFVQAGSEVSALLGRMPSQVGYQPTLGTEMGELQERITSTKKGSITSMQAVYVPADDYTDPAPATVFSHLDATITLERSIAAKGIYPAVDPLASTSRILDPNIVGEEHYRVAREVQRVLQRYKDLQDIIAILGVEELSDEDKLTVARARKIERFFSQPFTVAQQFTGRPGKYVPIGETVKSFARLLAGEVDHIPEQFFLLQGGLDDVIQAYEASRR.

Gly153–Thr160 serves as a coordination point for ATP.

It belongs to the ATPase alpha/beta chains family. In terms of assembly, F-type ATPases have 2 components, CF(1) - the catalytic core - and CF(0) - the membrane proton channel. CF(1) has five subunits: alpha(3), beta(3), gamma(1), delta(1), epsilon(1). CF(0) has four main subunits: a(1), b(1), b'(1) and c(9-12).

It is found in the cell membrane. It carries out the reaction ATP + H2O + 4 H(+)(in) = ADP + phosphate + 5 H(+)(out). In terms of biological role, produces ATP from ADP in the presence of a proton gradient across the membrane. The catalytic sites are hosted primarily by the beta subunits. The chain is ATP synthase subunit beta from Roseiflexus castenholzii (strain DSM 13941 / HLO8).